Consider the following 84-residue polypeptide: Large ribosomal subunit protein bL27 (84 aa).

This sequence belongs to the bacterial ribosomal protein bL27 family.

The polypeptide is Large ribosomal subunit protein bL27 (Buchnera aphidicola subsp. Schizaphis graminum (strain Sg)).